The primary structure comprises 394 residues: S-adenosylmethionine synthase (394 aa).

Residue H16 coordinates ATP. D18 contacts Mg(2+). E44 provides a ligand contact to K(+). Residues E57 and Q99 each contribute to the L-methionine site. The segment at 99–109 is flexible loop; sequence QSPDIAQGVDE. Residues 173–175, 240–241, D249, 255–256, A272, and K276 each bind ATP; these read DAK, RF, and RK. D249 is a binding site for L-methionine. K280 is a binding site for L-methionine.

The protein belongs to the AdoMet synthase family. As to quaternary structure, homotetramer; dimer of dimers. The cofactor is Mg(2+). Requires K(+) as cofactor.

The protein resides in the cytoplasm. The enzyme catalyses L-methionine + ATP + H2O = S-adenosyl-L-methionine + phosphate + diphosphate. It functions in the pathway amino-acid biosynthesis; S-adenosyl-L-methionine biosynthesis; S-adenosyl-L-methionine from L-methionine: step 1/1. In terms of biological role, catalyzes the formation of S-adenosylmethionine (AdoMet) from methionine and ATP. The overall synthetic reaction is composed of two sequential steps, AdoMet formation and the subsequent tripolyphosphate hydrolysis which occurs prior to release of AdoMet from the enzyme. The chain is S-adenosylmethionine synthase from Lacticaseibacillus paracasei (strain ATCC 334 / BCRC 17002 / CCUG 31169 / CIP 107868 / KCTC 3260 / NRRL B-441) (Lactobacillus paracasei).